The primary structure comprises 384 residues: Cyclin-J (384 aa).

Positions 15-143 constitute a Cyclin N-terminal domain; that stretch reads DIHQTLRYKE…LLETFEWNLC (129 aa).

Belongs to the cyclin family. Cyclin J subfamily.

The sequence is that of Cyclin-J (ccnj) from Xenopus laevis (African clawed frog).